A 201-amino-acid polypeptide reads, in one-letter code: Protein Thf1 (201 aa).

Positions I174–L201 form a coiled coil.

It belongs to the THF1 family.

May be involved in photosynthetic membrane biogenesis. This is Protein Thf1 from Prochlorococcus marinus (strain MIT 9312).